Consider the following 120-residue polypeptide: Large ribosomal subunit protein bL19 (120 aa).

This sequence belongs to the bacterial ribosomal protein bL19 family.

Its function is as follows. This protein is located at the 30S-50S ribosomal subunit interface and may play a role in the structure and function of the aminoacyl-tRNA binding site. This is Large ribosomal subunit protein bL19 from Kocuria rhizophila (strain ATCC 9341 / DSM 348 / NBRC 103217 / DC2201).